Consider the following 227-residue polypeptide: Enolase-phosphatase E1 (227 aa).

Mg(2+) is bound by residues Asp-11 and Glu-13. Substrate contacts are provided by residues 118-119 and Lys-161; that span reads SS. Asp-186 lines the Mg(2+) pocket.

Belongs to the HAD-like hydrolase superfamily. MasA/MtnC family. Monomer. Requires Mg(2+) as cofactor.

It localises to the cytoplasm. It is found in the nucleus. It carries out the reaction 5-methylsulfanyl-2,3-dioxopentyl phosphate + H2O = 1,2-dihydroxy-5-(methylsulfanyl)pent-1-en-3-one + phosphate. Its pathway is amino-acid biosynthesis; L-methionine biosynthesis via salvage pathway; L-methionine from S-methyl-5-thio-alpha-D-ribose 1-phosphate: step 3/6. It participates in amino-acid biosynthesis; L-methionine biosynthesis via salvage pathway; L-methionine from S-methyl-5-thio-alpha-D-ribose 1-phosphate: step 4/6. Its function is as follows. Bifunctional enzyme that catalyzes the enolization of 2,3-diketo-5-methylthiopentyl-1-phosphate (DK-MTP-1-P) into the intermediate 2-hydroxy-3-keto-5-methylthiopentenyl-1-phosphate (HK-MTPenyl-1-P), which is then dephosphorylated to form the acireductone 1,2-dihydroxy-3-keto-5-methylthiopentene (DHK-MTPene). The sequence is that of Enolase-phosphatase E1 from Saccharomyces cerevisiae (strain ATCC 204508 / S288c) (Baker's yeast).